The sequence spans 355 residues: Peptide chain release factor 1 (355 aa).

Glutamine 233 is modified (N5-methylglutamine). The disordered stretch occupies residues 280–310 (ERRKKEQKRANNRRGQVGSGDRSERIRTYNF).

Belongs to the prokaryotic/mitochondrial release factor family. Methylated by PrmC. Methylation increases the termination efficiency of RF1.

The protein resides in the cytoplasm. Peptide chain release factor 1 directs the termination of translation in response to the peptide chain termination codons UAG and UAA. In Rickettsia canadensis (strain McKiel), this protein is Peptide chain release factor 1.